We begin with the raw amino-acid sequence, 455 residues long: GTPase Der (455 aa).

EngA-type G domains follow at residues 3 to 167 and 184 to 359; these read FTIA…PEPA and IRVA…AVWN. Residues 9-16, 56-60, 119-122, 190-197, 237-241, and 302-305 each bind GTP; these read GRPNVGKS, DTAGL, NKSE, GRPNAGKS, and NKWD. Residues 360–444 form the KH-like domain; the sequence is RRVATALLNR…PIRITLREKA (85 aa).

It belongs to the TRAFAC class TrmE-Era-EngA-EngB-Septin-like GTPase superfamily. EngA (Der) GTPase family. Associates with the 50S ribosomal subunit.

GTPase that plays an essential role in the late steps of ribosome biogenesis. This Nitrobacter winogradskyi (strain ATCC 25391 / DSM 10237 / CIP 104748 / NCIMB 11846 / Nb-255) protein is GTPase Der.